We begin with the raw amino-acid sequence, 217 residues long: Uridylate kinase (217 aa).

6-10 (KISGR) serves as a coordination point for ATP. Residue G38 participates in UMP binding. Residues G39 and R43 each coordinate ATP. Residues D60 and 107–113 (FQPGQST) each bind UMP. The ATP site is built by N134, Y139, and D142.

This sequence belongs to the UMP kinase family. Homohexamer.

Its subcellular location is the cytoplasm. It carries out the reaction UMP + ATP = UDP + ADP. Its pathway is pyrimidine metabolism; CTP biosynthesis via de novo pathway; UDP from UMP (UMPK route): step 1/1. With respect to regulation, inhibited by UTP. Its function is as follows. Catalyzes the reversible phosphorylation of UMP to UDP. This Pyrobaculum arsenaticum (strain DSM 13514 / JCM 11321 / PZ6) protein is Uridylate kinase.